Reading from the N-terminus, the 142-residue chain is Hemoglobin anodic subunit alpha (142 aa).

Residue serine 1 is modified to N-acetylserine. Positions 1–142 (SLSTKDKAVV…LALALADRYR (142 aa)) constitute a Globin domain. Histidine 59 contributes to the O2 binding site. Position 88 (histidine 88) interacts with heme b.

The protein belongs to the globin family. In terms of assembly, heterotetramer of two alpha chains and two beta chains. In terms of tissue distribution, red blood cells.

Involved in oxygen transport from gills to the various peripheral tissues. This Gymnothorax unicolor (Brown moray) protein is Hemoglobin anodic subunit alpha.